The chain runs to 1187 residues: Non-receptor tyrosine-protein kinase TYK2 (1187 aa).

The 406-residue stretch at 26-431 (GGLKVLLHWA…GYFRLTADSS (406 aa)) folds into the FERM domain. Tyr-292 carries the phosphotyrosine modification. The tract at residues 335–366 (KEEGSSGSSGRNPQASLFGKKAKAHKAVGQPA) is disordered. The span at 339 to 349 (SSGSSGRNPQA) shows a compositional bias: polar residues. The region spanning 450–529 (GIHGPLLEPF…GRSFPSVREL (80 aa)) is the SH2; atypical domain. A phosphoserine mark is found at Ser-499 and Ser-525. The 287-residue stretch at 589–875 (ITQLSHLGQG…LTRLQPHNLA (287 aa)) folds into the Protein kinase 1 domain. Tyr-604 carries the phosphotyrosine modification. The interval 610–629 (VEGSGDPEEGKMDDEDPLVP) is disordered. A compositionally biased stretch (acidic residues) spans 614 to 626 (GDPEEGKMDDEDP). At Ser-884 the chain carries Phosphoserine. In terms of domain architecture, Protein kinase 2 spans 897-1176 (LKKIRDLGEG…PILKTVHEKY (280 aa)). Residues 903–911 (LGEGHFGKV) and Lys-930 contribute to the ATP site. Asp-1023 serves as the catalytic Proton acceptor. Phosphotyrosine; by autocatalysis is present on Tyr-1054. Tyr-1055 carries the phosphotyrosine modification.

The protein belongs to the protein kinase superfamily. Tyr protein kinase family. JAK subfamily. In terms of assembly, interacts (via FERM domain) with JAKMIP1. Interacts with PIK3R1; this interaction is important for cell migration. Interacts with MPL/TPOR. (Microbial infection) Interacts with Epstein-Barr virus protein LMP1; this interaction inhibits TYK2-mediated interferon signaling. As to quaternary structure, (Microbial infection) Interacts with papillomavirus-18 protein E6; this interaction impairs JAK-STAT activation by interferon-alpha. In terms of assembly, (Microbial infection) Interacts with Epstein-Barr virus (EBV) tegument protein BGLF2; this interaction participates in the inhibition of type I IFN signaling by the virus. Post-translationally, phosphorylated. Phosphorylation by JAK1 at Tyr-1054 and Tyr-1055 induces kinase activation. As to expression, observed in all cell lines analyzed. Expressed in a variety of lymphoid and non-lymphoid cell lines.

The catalysed reaction is L-tyrosyl-[protein] + ATP = O-phospho-L-tyrosyl-[protein] + ADP + H(+). With respect to regulation, the protein kinase 1 domain (also termed pseudokinase domain) mediates autoinhibition of the TYK2 kinase domain. In terms of biological role, tyrosine kinase of the non-receptor type involved in numerous cytokines and interferons signaling, which regulates cell growth, development, cell migration, innate and adaptive immunity. Plays both structural and catalytic roles in numerous interleukins and interferons (IFN-alpha/beta) signaling. Associates with heterodimeric cytokine receptor complexes and activates STAT family members including STAT1, STAT3, STAT4 or STAT6. The heterodimeric cytokine receptor complexes are composed of (1) a TYK2-associated receptor chain (IFNAR1, IL12RB1, IL10RB or IL13RA1), and (2) a second receptor chain associated either with JAK1 or JAK2. In response to cytokine-binding to receptors, phosphorylates and activates receptors (IFNAR1, IL12RB1, IL10RB or IL13RA1), creating docking sites for STAT members. In turn, recruited STATs are phosphorylated by TYK2 (or JAK1/JAK2 on the second receptor chain), form homo- and heterodimers, translocate to the nucleus, and regulate cytokine/growth factor responsive genes. Negatively regulates STAT3 activity by promototing phosphorylation at a specific tyrosine that differs from the site used for signaling. This is Non-receptor tyrosine-protein kinase TYK2 (TYK2) from Homo sapiens (Human).